The chain runs to 479 residues: Probable acyl-CoA desaturase (479 aa).

Residues 1-18 (MTAPSATAFSSATTQPTT) show a composition bias toward low complexity. The tract at residues 1-28 (MTAPSATAFSSATTQPTTEGNASMRKRT) is disordered. Topologically, residues 1–61 (MTAPSATAFS…PWTMQNWWRH (61 aa)) are cytoplasmic. Residues 62–82 (LNWLHCMLIFGLPMIAIYGVF) traverse the membrane as a helical segment. Topologically, residues 83-89 (TTPLQTK) are lumenal. Residues 90-110 (TLIFAIIYYAYSGLGITAGYH) traverse the membrane as a helical segment. 5 residues coordinate Fe cation: histidine 110, histidine 115, histidine 147, histidine 150, and histidine 151. The Histidine box-1 signature appears at 110-115 (HRLWSH). Residues 111 to 204 (RLWSHRAYKA…DPFVMFNHRH (94 aa)) lie on the Cytoplasmic side of the membrane. A Histidine box-2 motif is present at residues 147–151 (HRAHH). The helical transmembrane segment at 205–225 (FLPIASFMAFIFPSLFCGLLW) threads the bilayer. At 226–229 (GDYR) the chain is on the lumenal side. Residues 230-250 (GGYFYAGVCRLVFVHHATFCV) form a helical membrane-spanning segment. Topologically, residues 251–479 (NSLAHLIGSQ…QPPIEAAAAN (229 aa)) are cytoplasmic. Fe cation is bound by residues histidine 255, histidine 284, histidine 287, and histidine 288. The short motif at 284–288 (HNYHH) is the Histidine box-3 element. The Cytochrome b5 heme-binding domain occupies 357–433 (QLPVMEFEDF…LSTYRVAVVR (77 aa)). The heme site is built by histidine 390 and histidine 416.

Belongs to the fatty acid desaturase type 1 family. Fe(2+) serves as cofactor.

The protein localises to the membrane. It carries out the reaction octadecanoyl-CoA + 2 Fe(II)-[cytochrome b5] + O2 + 2 H(+) = (9Z)-octadecenoyl-CoA + 2 Fe(III)-[cytochrome b5] + 2 H2O. Its function is as follows. Stearoyl-CoA desaturase that utilizes O(2) and electrons from reduced cytochrome b5 to introduce the first double bond into saturated fatty acyl-CoA substrates. Catalyzes the insertion of a cis double bond at the delta-9 position into fatty acyl-CoA substrates including palmitoyl-CoA and stearoyl-CoA. Contributes to the biosynthesis of membrane phospholipids, cholesterol esters and triglycerides. The polypeptide is Probable acyl-CoA desaturase (Schizosaccharomyces pombe (strain 972 / ATCC 24843) (Fission yeast)).